Consider the following 419-residue polypeptide: Enolase (419 aa).

Q161 lines the (2R)-2-phosphoglycerate pocket. Residue E205 is the Proton donor of the active site. Mg(2+)-binding residues include D240, E283, and D309. Residues K334, R363, S364, and K385 each contribute to the (2R)-2-phosphoglycerate site. The active-site Proton acceptor is K334.

The protein belongs to the enolase family. Requires Mg(2+) as cofactor.

It localises to the cytoplasm. The protein resides in the secreted. Its subcellular location is the cell surface. The catalysed reaction is (2R)-2-phosphoglycerate = phosphoenolpyruvate + H2O. It participates in carbohydrate degradation; glycolysis; pyruvate from D-glyceraldehyde 3-phosphate: step 4/5. Functionally, catalyzes the reversible conversion of 2-phosphoglycerate (2-PG) into phosphoenolpyruvate (PEP). It is essential for the degradation of carbohydrates via glycolysis. The polypeptide is Enolase (Saccharolobus islandicus (strain Y.N.15.51 / Yellowstone #2) (Sulfolobus islandicus)).